We begin with the raw amino-acid sequence, 48 residues long: Cytochrome b559 subunit beta (48 aa).

Residues 23–39 (WLAVHALAIPTVFFLGA) form a helical membrane-spanning segment. Histidine 27 contacts heme.

Belongs to the PsbE/PsbF family. As to quaternary structure, heterodimer of an alpha subunit and a beta subunit. PSII is composed of 1 copy each of membrane proteins PsbA, PsbB, PsbC, PsbD, PsbE, PsbF, PsbH, PsbI, PsbJ, PsbK, PsbL, PsbM, PsbT, PsbX, PsbY, Psb30/Ycf12, peripheral proteins PsbO, CyanoQ (PsbQ), PsbU, PsbV and a large number of cofactors. It forms dimeric complexes. The cofactor is heme b.

It localises to the cellular thylakoid membrane. Functionally, this b-type cytochrome is tightly associated with the reaction center of photosystem II (PSII). PSII is a light-driven water:plastoquinone oxidoreductase that uses light energy to abstract electrons from H(2)O, generating O(2) and a proton gradient subsequently used for ATP formation. It consists of a core antenna complex that captures photons, and an electron transfer chain that converts photonic excitation into a charge separation. In Prochlorococcus marinus (strain SARG / CCMP1375 / SS120), this protein is Cytochrome b559 subunit beta.